The sequence spans 162 residues: Peptidyl-prolyl cis-trans isomerase-like 1 (162 aa).

The 155-residue stretch at 1–155 folds into the PPIase cyclophilin-type domain; the sequence is MATDVAFDTS…DGVKILRARI (155 aa).

Belongs to the cyclophilin-type PPIase family. PPIL1 subfamily.

It carries out the reaction [protein]-peptidylproline (omega=180) = [protein]-peptidylproline (omega=0). PPIases accelerate the folding of proteins. It catalyzes the cis-trans isomerization of proline imidic peptide bonds in oligopeptides. This chain is Peptidyl-prolyl cis-trans isomerase-like 1 (cypC), found in Aspergillus niger.